The chain runs to 138 residues: Large ribosomal subunit protein uL16 (138 aa).

Residues 1–29 are disordered; it reads MSLLQPRKVKWRKPQKGRTKGKATRRNQV. Positions 7–25 are enriched in basic residues; the sequence is RKVKWRKPQKGRTKGKATR.

The protein belongs to the universal ribosomal protein uL16 family. In terms of assembly, part of the 50S ribosomal subunit.

Binds 23S rRNA and is also seen to make contacts with the A and possibly P site tRNAs. This Sulfurihydrogenibium sp. (strain YO3AOP1) protein is Large ribosomal subunit protein uL16.